The following is a 115-amino-acid chain: Basic leucine zipper transcriptional factor ATF-like (115 aa).

The interval 1–60 (MQQESDRNEQGYSSSPPSSNKQDSSDDTKKNHRREKNRIAAQKSRQRQTEKADSLHIESE) is disordered. Residues 13–22 (SSSPPSSNKQ) are compositionally biased toward low complexity. A bZIP domain is found at 27–90 (DTKKNHRREK…KYLTCVLSTH (64 aa)). A basic motif region spans residues 29-51 (KKNHRREKNRIAAQKSRQRQTEK). The segment covering 47 to 60 (RQTEKADSLHIESE) has biased composition (basic and acidic residues). The interval 55–83 (LHIESENLERLNSALRGEISGLREELKYL) is leucine-zipper.

This sequence belongs to the bZIP family.

Its subcellular location is the nucleus. It localises to the cytoplasm. AP-1 family transcription factor that controls the differentiation of lineage-specific cells in the immune system: specifically mediates the differentiation of T-helper 17 cells (Th17), follicular T-helper cells (TfH), CD8(+) dendritic cells and class-switch recombination (CSR) in B-cells. This is Basic leucine zipper transcriptional factor ATF-like (batf) from Xenopus laevis (African clawed frog).